Reading from the N-terminus, the 547-residue chain is Smu-2 suppressor of mec-8 and unc-52 protein (547 aa).

5 disordered regions span residues 18–125 (TSAR…AQDQ), 164–202 (IDKSDDDDDDDIDTAFDEKVTSSSSSSKPSEASLLAQEL), 288–459 (AEPK…AGPK), 496–515 (NGEGGRKNKKQSAVSDAKRL), and 524–547 (KIMDKRKAGGDGAGGGGDYKKPKY). Residues 34–44 (ADPKTGDDKPA) show a composition bias toward basic and acidic residues. Residues 45–58 (SFKHKHLKPAKFKK) are compositionally biased toward basic residues. A coiled-coil region spans residues 66-94 (KAKKEKTEADEDEAALKNILKNYRDRAAE). A compositionally biased stretch (basic and acidic residues) spans 87-106 (NYRDRAAERRKQGDEKEDPS). The interval 163–223 (EIDKSDDDDD…SLHRVLFKNE (61 aa)) is required and sufficient for interaction with smu-1. Residues 166–178 (KSDDDDDDDIDTA) are compositionally biased toward acidic residues. 2 stretches are compositionally biased toward low complexity: residues 185 to 196 (SSSSSSKPSEAS) and 307 to 317 (APGAAAAAPGA). Positions 330 to 423 (VPSRKSRDSR…EREKKRKELE (94 aa)) are enriched in basic and acidic residues. 12 consecutive repeat copies span residues 336-337 (RD), 339-340 (RD), 348-349 (RD), 350-351 (RS), 352-353 (RD), 354-355 (RS), 356-357 (RD), 358-359 (RD), 360-361 (RD), 362-363 (RD), 364-365 (RD), and 367-368 (RD). Residues 336–368 (RDSRDAGRRGSRRDRSRDRSRDRDRDRDRDNRD) are 12 X 2 AA repeats of R-[DS]. Positions 371 to 427 (FEKSANSRREEEQNRREQQRERERAEQERRREREKEREQEKAKEREKKRKELEESSG) form a coiled coil.

The protein belongs to the RED family. In terms of assembly, probable component of the spliceosome. Heterotetramer with smu-1. The smu-1 homodimer interacts (via the N-terminal region including the LisH and CTLH domains) with smu-2, giving rise to a heterotetramer. As to expression, ubiquitous.

The protein localises to the nucleus. Its function is as follows. Auxiliary spliceosomal protein that regulates selection of alternative splice sites in a small set of target pre-mRNA species. Selectively regulates alternative splicing of unc-52 exon 17. Thus, smu-2 mutants selectively suppress the effects of unc-52 nonsense mutations in exon 17 by promoting the accumulation of unc-52 isoforms that lack exon 17. In contrast, smu-2 mutants do not suppress the effects of an unc-52 mutation that affects the 5' splice site of exon 16. Required for normal accumulation of smu-1. The chain is Smu-2 suppressor of mec-8 and unc-52 protein from Caenorhabditis elegans.